A 197-amino-acid polypeptide reads, in one-letter code: OV-16 antigen (197 aa).

The signal sequence occupies residues M1 to G16. N-linked (GlcNAc...) asparagine glycosylation is found at N56, N61, N119, and N124.

The protein belongs to the phosphatidylethanolamine-binding protein family. As to expression, hypodermis, cuticle and uterus.

The sequence is that of OV-16 antigen (OV16) from Onchocerca volvulus.